The primary structure comprises 138 residues: Small ribosomal subunit protein uS11c (138 aa).

The interval 1–22 (MAKSIPRISSRRNGPIGSGKTV) is disordered.

Belongs to the universal ribosomal protein uS11 family. Part of the 30S ribosomal subunit.

Its subcellular location is the plastid. The sequence is that of Small ribosomal subunit protein uS11c from Cuscuta exaltata (Tall dodder).